The primary structure comprises 308 residues: Uricase-2 (308 aa).

Catalysis depends on charge relay system residues Lys-17 and Thr-63. Urate-binding residues include Thr-63, Asp-64, Phe-165, Arg-182, Val-237, Gln-238, and Asn-264. His-266 acts as the Charge relay system in catalysis. The Microbody targeting signal signature appears at 306–308 (SKL).

This sequence belongs to the uricase family. Homotetramer. As to expression, expressed predominantly in the uninfected cells of the central tissue of the root nodule. Also expressed in the nodule parenchyma cells and vascular tissue, in the roots, stems and leaves of uninfected adult plants, and in the cotyledons, roots and hypocotyls of developing seedlings. Localized to the metaxylem parenchyma cells and phloem fibers of developing roots.

It localises to the peroxisome. It catalyses the reaction urate + O2 + H2O = 5-hydroxyisourate + H2O2. The protein operates within purine metabolism; urate degradation; (S)-allantoin from urate: step 1/3. Functionally, catalyzes the oxidation of uric acid to 5-hydroxyisourate, which is further processed to form (S)-allantoin. This chain is Uricase-2 (URIII), found in Phaseolus vulgaris (Kidney bean).